Reading from the N-terminus, the 108-residue chain is Protein RnfH (108 aa).

The protein belongs to the UPF0125 (RnfH) family.

The protein is Protein RnfH of Laribacter hongkongensis (strain HLHK9).